We begin with the raw amino-acid sequence, 381 residues long: Acetylornithine deacetylase (381 aa).

Position 79 (H79) interacts with Zn(2+). Residue D81 is part of the active site. D111 lines the Zn(2+) pocket. E143 is an active-site residue. E144, E168, and H354 together coordinate Zn(2+).

The protein belongs to the peptidase M20A family. ArgE subfamily. Homodimer. Requires Zn(2+) as cofactor. Co(2+) serves as cofactor. It depends on glutathione as a cofactor.

The protein resides in the cytoplasm. It carries out the reaction N(2)-acetyl-L-ornithine + H2O = L-ornithine + acetate. It participates in amino-acid biosynthesis; L-arginine biosynthesis; L-ornithine from N(2)-acetyl-L-ornithine (linear): step 1/1. Its function is as follows. Catalyzes the hydrolysis of the amide bond of N(2)-acetylated L-amino acids. Cleaves the acetyl group from N-acetyl-L-ornithine to form L-ornithine, an intermediate in L-arginine biosynthesis pathway, and a branchpoint in the synthesis of polyamines. This Buchnera aphidicola subsp. Acyrthosiphon pisum (strain Tuc7) protein is Acetylornithine deacetylase.